Consider the following 70-residue polypeptide: MKQGIHPEYKEITATCSCGNVIKTRSTLGKDINLDVCGNCHPFYTGKQRVVDTGGRVERFNSRFKIPSTK.

Cys16, Cys18, Cys37, and Cys40 together coordinate Zn(2+).

This sequence belongs to the bacterial ribosomal protein bL31 family. Type A subfamily. Part of the 50S ribosomal subunit. Zn(2+) serves as cofactor.

Binds the 23S rRNA. This is Large ribosomal subunit protein bL31 from Haemophilus influenzae (strain PittEE).